The following is a 125-amino-acid chain: Prefoldin subunit beta (125 aa).

Belongs to the prefoldin subunit beta family. Heterohexamer of two alpha and four beta subunits.

It localises to the cytoplasm. Its function is as follows. Molecular chaperone capable of stabilizing a range of proteins. Seems to fulfill an ATP-independent, HSP70-like function in archaeal de novo protein folding. The sequence is that of Prefoldin subunit beta from Pyrobaculum islandicum (strain DSM 4184 / JCM 9189 / GEO3).